The sequence spans 288 residues: Bis(5'-nucleosyl)-tetraphosphatase, symmetrical (288 aa).

This sequence belongs to the Ap4A hydrolase family.

The enzyme catalyses P(1),P(4)-bis(5'-adenosyl) tetraphosphate + H2O = 2 ADP + 2 H(+). Its function is as follows. Hydrolyzes diadenosine 5',5'''-P1,P4-tetraphosphate to yield ADP. The chain is Bis(5'-nucleosyl)-tetraphosphatase, symmetrical from Pseudomonas putida (strain W619).